A 290-amino-acid polypeptide reads, in one-letter code: Arylamine N-acetyltransferase 1 (290 aa).

M1 bears the N-acetylmethionine mark. C68 (acyl-thioester intermediate) is an active-site residue. S103 provides a ligand contact to CoA. Residue 106–107 (VH) participates in substrate binding. Active-site residues include H107 and D122. Y208 is a CoA binding site.

The protein belongs to the arylamine N-acetyltransferase family.

It localises to the cytoplasm. The enzyme catalyses an arylamine + acetyl-CoA = an N-acetylarylamine + CoA. Participates in the detoxification of a plethora of hydrazine and arylamine drugs. Isoniazid, 2-aminofluorene and anisidine are preferred substrates for NAT-1. No activity with p-aminobenzoic acid (PABA) nor SMZ. The chain is Arylamine N-acetyltransferase 1 (Nat1) from Mus musculus (Mouse).